The chain runs to 428 residues: Pregnancy-specific beta-1-glycoprotein 3 (428 aa).

Positions Met1–Ala34 are cleaved as a signal peptide. The Ig-like V-type domain maps to Gln35–Leu144. Asn104 and Asn111 each carry an N-linked (GlcNAc...) asparagine glycan. The short motif at Arg127–Asp129 is the Cell attachment site element. 3 consecutive Ig-like C2-type domains span residues Pro147 to Asn234, Pro240 to Asn327, and Pro335 to Thr410. 3 disulfides stabilise this stretch: Cys169-Cys217, Cys262-Cys310, and Cys354-Cys394. N-linked (GlcNAc...) asparagine glycosylation is found at Asn268 and Asn303.

This sequence belongs to the immunoglobulin superfamily. CEA family.

The protein localises to the secreted. In Homo sapiens (Human), this protein is Pregnancy-specific beta-1-glycoprotein 3 (PSG3).